Consider the following 366-residue polypeptide: Photosynthetic reaction center cytochrome c subunit (366 aa).

Positions 1 to 22 (MALAVRISTLTVAVTAAALLAG) are cleaved as a signal peptide. Cysteine 23 carries N-palmitoyl cysteine lipidation. The S-diacylglycerol cysteine moiety is linked to residue cysteine 23. Methionine 94, cysteine 107, cysteine 110, histidine 111, methionine 129, histidine 143, cysteine 151, cysteine 154, histidine 155, methionine 238, cysteine 249, cysteine 252, histidine 253, cysteine 309, cysteine 312, and histidine 313 together coordinate heme.

In terms of assembly, component of the photosynthetic reaction center composed of protein subunits L (PufL), M (PufM), H (PuhA) and cytochrome C (PufC). The reaction center interacts with light-harvesting antenna complex LH1. In terms of processing, binds 4 heme groups per subunit.

It is found in the cellular chromatophore membrane. Its function is as follows. The reaction center of purple bacteria contains a tightly bound cytochrome molecule which re-reduces the photo oxidized primary electron donor. The polypeptide is Photosynthetic reaction center cytochrome c subunit (pufC) (Rubrivivax gelatinosus (strain NBRC 100245 / IL144)).